A 510-amino-acid polypeptide reads, in one-letter code: MKVCQKSIVRFLVSLIIGTFVISVPFMANAQSDRELRAVWIASVLNIDWPSKKGLSVKEQKQEYIKLLDDVQKMGMNAVIVQIKPTADAFYPSAYGPWSEYLTGVQGKDPGYDPLAFMIEETHKRNLEFHAWFNPYRITMNHTDLNKLSEDHPARKHPDWVAAYGNQLYYHPGIPEARDFIVKGIEEVVKHYDIDAVHMDDYFYPYKIAGQEFPDQAQYEQYGKDAFSNIDDWRRDNVNQLVKQINQTIKAAKPYVKFGISPFGVWRNAADDPTGSNTKAGVRNYDDLYADTRHWIQEGDIDYIAPQIYWSIGFNAAAYDVLADWWSNEVKNRPVHLYIGQAAYKINNNFDPPWSDPEEYVRQITLNRQLELVKGSMHFSLKDLNKNPLGIKDSLSTDLYSKPALVPQMPWLDNTAPKKPKLTKVTEDKNGNLLQIKDHPSNQKTKETAYYAIYRAEGKKQRTLLATQRKTHEQQTFLDNTADPNKKYTYYVTSADRLHNESKASKRTTK.

Residues 1–30 (MKVCQKSIVRFLVSLIIGTFVISVPFMANA) form the signal peptide.

It belongs to the glycosyl hydrolase-like 10 (GHL10) family.

The polypeptide is Glycosyl hydrolase YngK (yngK) (Bacillus subtilis (strain 168)).